The chain runs to 63 residues: Large ribosomal subunit protein uL29 (63 aa).

It belongs to the universal ribosomal protein uL29 family.

This chain is Large ribosomal subunit protein uL29, found in Flavobacterium johnsoniae (strain ATCC 17061 / DSM 2064 / JCM 8514 / BCRC 14874 / CCUG 350202 / NBRC 14942 / NCIMB 11054 / UW101) (Cytophaga johnsonae).